The chain runs to 550 residues: MSADDGGIRAAQDKERARETPGHGHSCQEMLSESEGTVPLGEAWESPHIKMEPEEPHPEGVSQETRAEGARGWVPLSQGTKEKVCFLPGGALPAPQTPVLSREGRTRDRQMAAALLTAWSQMPVTFEDMALYLSREEWGRLDHTQQSFYREVLQKRSGLSLGFPFSRPFWASQVQGKGEAPGSSRQLGHEEEEKRGVVEVDKEELAASLGALGDAKSFKSRMGRAQGEAPRCGQRAASGQNSGPAKDDVQPCPVKEAQLESAPPDTDLPKTQEGHFPEQPREGGTAAPESSEEGLALDSEAGKKTYKCEQCGKAFSWHSHLVTHRRTHTGEKPYACTDCGKRFGRSSHLIQHQIIHTGEKPYTCPSCWKSFSHHSTLIQHQRIHTGEKPYVCDRCAKRFTRRSDLVTHQGTHTGAKPHKCPICGKCFTQSSALVTHQRTHTGVKPYPCPECGKCFSQRSNLIAHNRTHTGEKPYHCLDCGKSFSHSSHLTAHQRTHRGVRPYSCPLCGKSFSRRSNLHRHEKIHTAGPKALAMLMLGAAGTLAAPPPAPT.

3 disordered regions span residues methionine 1 to alanine 67, valine 174 to valine 200, and lysine 216 to alanine 296. 3 stretches are compositionally biased toward basic and acidic residues: residues alanine 11–glycine 22, glutamate 45–proline 58, and leucine 187–valine 200. Residues valine 124–glutamate 193 enclose the KRAB domain. A Glycyl lysine isopeptide (Lys-Gly) (interchain with G-Cter in SUMO2) cross-link involves residue lysine 216. A compositionally biased stretch (basic and acidic residues) spans aspartate 267 to arginine 281. A Phosphoserine modification is found at serine 290. 8 C2H2-type zinc fingers span residues tyrosine 306–histidine 328, tyrosine 334–histidine 356, tyrosine 362–histidine 384, tyrosine 390–histidine 412, histidine 418–histidine 440, tyrosine 446–histidine 468, tyrosine 474–histidine 496, and tyrosine 502–histidine 524.

This sequence belongs to the krueppel C2H2-type zinc-finger protein family.

It localises to the nucleus. Transcriptional repressor involved in regulating MPV17L expression. By regulating MPV17L expression, contributes to the regulation of genes involved in H(2)O(2) metabolism and the mitochondrial apoptotic cascade. This is Transcriptional repressor RHIT (ZNF205) from Bos taurus (Bovine).